Consider the following 406-residue polypeptide: Kelch domain-containing protein 2 (406 aa).

6 Kelch repeats span residues 31–85, 92–136, 148–207, 221–259, 271–311, and 322–359; these read ERSG…NTEG, SGSC…ERID, LGVW…AWSQ, HACATVGNKGFVFGGRYRDARMNDLHYLNLDTWEWNELI, HSLT…IQFN, and HTACASDEGEVIVFGGCANNLLVHHRAAHSNEVLIFSV.

As to quaternary structure, component of a CRL2(KLHDC2) E3 ubiquitin-protein ligase complex, also named ECS(KLHDC2) complex, composed of CUL2, Elongin BC (ELOB and ELOC), RBX1 and substrate-specific adapter KLHDC2. May form oligomers as a KLHDC2-ELOB-ELOC complex; this interaction is autoinhibitory for the E3 ligase complex as the substrate-binding site of KLHDC2 is blocked in the oligomer. Interacts with CREB3; interaction is direct and specific as it does not interact with CREB1, ATF4, ATF6, JUN, FOS, CEBPA or herpes simplex virus transactivator VP16. Post-translationally, autoubiquitinated by the CRL2(KLHDC2) E3 ligase complex.

It localises to the nucleus. It participates in protein modification; protein ubiquitination. In terms of biological role, substrate-recognition component of a Cul2-RING (CRL2) E3 ubiquitin-protein ligase complex of the DesCEND (destruction via C-end degrons) pathway, which recognizes a C-degron located at the extreme C terminus of target proteins, leading to their ubiquitination and degradation. The C-degron recognized by the DesCEND pathway is usually a motif of less than ten residues and can be present in full-length proteins, truncated proteins or proteolytically cleaved forms. The CRL2(KLHDC2) complex specifically recognizes proteins with a diglycine (Gly-Gly) at the C-terminus, leading to their ubiquitination and degradation. The CRL2(KLHDC2) complex mediates ubiquitination and degradation of truncated SELENOK and SELENOS selenoproteins produced by failed UGA/Sec decoding, which end with a diglycine. The CRL2(KLHDC2) complex also recognizes proteolytically cleaved proteins ending with Gly-Gly, such as the N-terminal fragment of USP1, leading to their degradation. May also act as an indirect repressor of CREB3-mediated transcription by interfering with CREB3-DNA-binding. The sequence is that of Kelch domain-containing protein 2 from Mus musculus (Mouse).